The primary structure comprises 159 residues: NADH-quinone oxidoreductase subunit B (159 aa).

Residues Cys36, Cys37, Cys102, and Cys132 each contribute to the [4Fe-4S] cluster site.

It belongs to the complex I 20 kDa subunit family. In terms of assembly, NDH-1 is composed of 14 different subunits. Subunits NuoB, C, D, E, F, and G constitute the peripheral sector of the complex. The cofactor is [4Fe-4S] cluster.

Its subcellular location is the cell inner membrane. The catalysed reaction is a quinone + NADH + 5 H(+)(in) = a quinol + NAD(+) + 4 H(+)(out). In terms of biological role, NDH-1 shuttles electrons from NADH, via FMN and iron-sulfur (Fe-S) centers, to quinones in the respiratory chain. Couples the redox reaction to proton translocation (for every two electrons transferred, four hydrogen ions are translocated across the cytoplasmic membrane), and thus conserves the redox energy in a proton gradient. The sequence is that of NADH-quinone oxidoreductase subunit B from Verminephrobacter eiseniae (strain EF01-2).